The chain runs to 324 residues: Lipid droplet-associated hydrolase (324 aa).

Residue Ser136 is the Nucleophile of the active site. Active-site charge relay system residues include Asp270 and His299.

The protein belongs to the AB hydrolase superfamily. LDAH family.

The protein resides in the lipid droplet. It localises to the endoplasmic reticulum. The enzyme catalyses a cholesterol ester + H2O = cholesterol + a fatty acid + H(+). Probable serine lipid hydrolase associated with lipid droplets. Has low cholesterol esterase activity. Appears to lack triglyceride lipase activity. Involved in cholesterol and triglyceride homeostasis; stimulates cellular triglyceride accumulation and cellular cholesterol release. The chain is Lipid droplet-associated hydrolase from Gallus gallus (Chicken).